Consider the following 473-residue polypeptide: ATP synthase subunit beta (473 aa).

153–160 provides a ligand contact to ATP; it reads GGAGVGKT.

Belongs to the ATPase alpha/beta chains family. In terms of assembly, F-type ATPases have 2 components, CF(1) - the catalytic core - and CF(0) - the membrane proton channel. CF(1) has five subunits: alpha(3), beta(3), gamma(1), delta(1), epsilon(1). CF(0) has three main subunits: a(1), b(2) and c(9-12). The alpha and beta chains form an alternating ring which encloses part of the gamma chain. CF(1) is attached to CF(0) by a central stalk formed by the gamma and epsilon chains, while a peripheral stalk is formed by the delta and b chains.

It is found in the cell inner membrane. The catalysed reaction is ATP + H2O + 4 H(+)(in) = ADP + phosphate + 5 H(+)(out). Functionally, produces ATP from ADP in the presence of a proton gradient across the membrane. The catalytic sites are hosted primarily by the beta subunits. This is ATP synthase subunit beta from Rickettsia canadensis (strain McKiel).